Reading from the N-terminus, the 856-residue chain is Paladin (856 aa).

Over residues Met1–Thr16 the composition is skewed to low complexity. Residues Met1–Ser29 are disordered. Gly2 carries the N-myristoyl glycine lipid modification. Ser86 is subject to Phosphoserine.

Belongs to the paladin family. As to expression, expressed in endothelial cells, and in certain larger vessels, in mural cells. In the brain, possibly expressed in microglia. Expressed in peripheral blood mononuclear cells (at protein level).

The protein resides in the cytoplasm. The protein localises to the cytosol. This chain is Paladin (PALD1), found in Homo sapiens (Human).